The following is a 152-amino-acid chain: Homeobox protein ceh-63 (152 aa).

Polar residues predominate over residues 21-30 (NDTNSSQQIK). 2 disordered regions span residues 21–48 (NDTN…RTTF) and 92–126 (RRTK…SQHV). Positions 35–44 (PPKRSNRPTK) are enriched in basic residues. The segment at residues 41–100 (RPTKRTTFTSEQVTLLELEFAKNEYICKDRRGELAQTIELTECQVKTWFQNRRTKKRRCT) is a DNA-binding region (homeobox). The span at 116–126 (PSPQNPSSQHV) shows a compositional bias: polar residues.

In terms of assembly, may interact with homeobox protein ceh-14.

The protein resides in the nucleus. Functionally, probable transcription factor, modulating expression of helix-loop-helix protein mbr-1, perhaps acting in concert with homeobox protein ceh-14. May play a minor role in axon guidance in the DVC interneuron. The polypeptide is Homeobox protein ceh-63 (Caenorhabditis elegans).